Here is a 501-residue protein sequence, read N- to C-terminus: Lysine--tRNA ligase (501 aa).

The Mg(2+) site is built by E411 and E418.

Belongs to the class-II aminoacyl-tRNA synthetase family. As to quaternary structure, homodimer. It depends on Mg(2+) as a cofactor.

It localises to the cytoplasm. It catalyses the reaction tRNA(Lys) + L-lysine + ATP = L-lysyl-tRNA(Lys) + AMP + diphosphate. The sequence is that of Lysine--tRNA ligase from Magnetococcus marinus (strain ATCC BAA-1437 / JCM 17883 / MC-1).